Consider the following 141-residue polypeptide: Cholinesterase (141 aa).

N-linked (GlcNAc...) asparagine glycosylation is present at asparagine 39. Position 49 to 50 (49 to 50 (GG)) interacts with substrate. Serine 131 functions as the Acyl-ester intermediate in the catalytic mechanism. Serine 131 is subject to Phosphoserine.

It belongs to the type-B carboxylesterase/lipase family. In terms of assembly, homotetramer; disulfide-linked. Dimer of dimers. As to expression, present in most cells except erythrocytes.

The protein localises to the secreted. The enzyme catalyses an acylcholine + H2O = a carboxylate + choline + H(+). Functionally, esterase with broad substrate specificity. Contributes to the inactivation of the neurotransmitter acetylcholine. Can degrade neurotoxic organophosphate esters. The polypeptide is Cholinesterase (BCHE) (Sus scrofa (Pig)).